The primary structure comprises 318 residues: Protease HtpX homolog (318 aa).

The next 2 membrane-spanning stretches (helical) occupy residues Thr-6–Gly-26 and Gly-28–Ser-48. His-130 contributes to the Zn(2+) binding site. The active site involves Glu-131. His-134 lines the Zn(2+) pocket. The next 2 membrane-spanning stretches (helical) occupy residues Ile-145–Gly-165 and Pro-173–Val-193. Residue Glu-202 coordinates Zn(2+). The disordered stretch occupies residues Asn-284 to Ser-318.

This sequence belongs to the peptidase M48B family. It depends on Zn(2+) as a cofactor.

It localises to the cell inner membrane. The polypeptide is Protease HtpX homolog (Rhizobium etli (strain ATCC 51251 / DSM 11541 / JCM 21823 / NBRC 15573 / CFN 42)).